Reading from the N-terminus, the 175-residue chain is Endoribonuclease YbeY (175 aa).

3 residues coordinate Zn(2+): H129, H133, and H139.

The protein belongs to the endoribonuclease YbeY family. Requires Zn(2+) as cofactor.

The protein localises to the cytoplasm. Its function is as follows. Single strand-specific metallo-endoribonuclease involved in late-stage 70S ribosome quality control and in maturation of the 3' terminus of the 16S rRNA. The chain is Endoribonuclease YbeY from Lactobacillus gasseri (strain ATCC 33323 / DSM 20243 / BCRC 14619 / CIP 102991 / JCM 1131 / KCTC 3163 / NCIMB 11718 / NCTC 13722 / AM63).